The following is a 305-amino-acid chain: Olfactory receptor 4F5 (305 aa).

Residues 1–18 (MVTEFIFLGLSDSQELQT) are Extracellular-facing. The helical transmembrane segment at 19-42 (FLFMLFFVFYGGIVFGNLLIVITV) threads the bilayer. The Cytoplasmic portion of the chain corresponds to 43-50 (VSDSHLHS). A helical transmembrane segment spans residues 51–72 (PMYFLLANLSLIDLSLSSVTAP). Topologically, residues 73 to 93 (KMITDFFSQRKVISFKGCLVQ) are extracellular. C90 and C182 form a disulfide bridge. A helical membrane pass occupies residues 94–113 (IFLLHFFGGSEMVILIAMGF). Over 114–132 (DRYIAICKPLHYTTIMCGN) the chain is Cytoplasmic. The chain crosses the membrane as a helical span at residues 133–151 (ACVGIMAVTWGIGFLHSVS). At 152 to 188 (QLAFAVHLLFCGPNEVDSFYCDLPRVIKLACTDTYRL) the chain is on the extracellular side. Residues 189-212 (DIMVIANSGVLTVCSFVLLIISYT) form a helical membrane-spanning segment. The Cytoplasmic segment spans residues 213-228 (IILMTIQHRPLDKSSK). A helical membrane pass occupies residues 229-251 (ALSTLTAHITVVLLFFGPCVFIY). Residues 252-262 (AWPFPIKSLDK) are Extracellular-facing. The chain crosses the membrane as a helical span at residues 263 to 282 (FLAVFYSVITPLLNPIIYTL). The Cytoplasmic portion of the chain corresponds to 283–305 (RNKDMKTAIRQLRKWDAHSSVKF).

This sequence belongs to the G-protein coupled receptor 1 family.

It is found in the cell membrane. Functionally, odorant receptor. The chain is Olfactory receptor 4F5 (OR4F5) from Homo sapiens (Human).